Here is a 539-residue protein sequence, read N- to C-terminus: Dopamine receptor 2 (539 aa).

Over 1 to 113 (MVDDNGSSPE…LPNDRVGLLA (113 aa)) the chain is Extracellular. N-linked (GlcNAc...) asparagine glycans are attached at residues Asn-5, Asn-31, Asn-47, and Asn-68. The helical transmembrane segment at 114–134 (FLFLFSFATVFGNSLVILAVI) threads the bilayer. Topologically, residues 135 to 145 (RERYLHTATNY) are cytoplasmic. A helical transmembrane segment spans residues 146 to 166 (FITSLAVADCLVGLVVMPFSA). Topologically, residues 167–189 (LYEVLENTWFFGTDWCDIWRSLD) are extracellular. Cysteines 182 and 261 form a disulfide. The helical transmembrane segment at 190–206 (VLFSTASILNLCVISLD) threads the bilayer. Residues 207–227 (RYWAITDPFSYPMRMTVKRAA) are Cytoplasmic-facing. The chain crosses the membrane as a helical span at residues 228-248 (GLIAAVWICSSAISFPAIVWW). Residues 249 to 266 (RAARDGEMPAYKCTFTEH) are Extracellular-facing. Residues 267–287 (LGYLVFSSTISFYLPLLVMVF) form a helical membrane-spanning segment. Topologically, residues 288–420 (TYCRIYRAAV…FAKEKKAAKT (133 aa)) are cytoplasmic. The tract at residues 326–387 (GGTTRDQQNQ…EPDDEPLSAL (62 aa)) is disordered. Over residues 337-352 (SGGGGGGGGGGGGGGS) the composition is skewed to gly residues. The segment covering 356–367 (SHSHSHHHHHNH) has biased composition (basic residues). The chain crosses the membrane as a helical span at residues 421–441 (LGIVMGVFIICWLPFFVVNLL). At 442–453 (SGFCIECIEHEE) the chain is on the extracellular side. Residues 454–474 (IVSAIVTWLGWINSCMNPVIY) form a helical membrane-spanning segment. Residues 475–539 (ACWSRDFRRA…RHNSCEQTYI (65 aa)) lie on the Cytoplasmic side of the membrane. S-palmitoyl cysteine attachment occurs at residues Cys-492 and Cys-493.

The protein belongs to the G-protein coupled receptor 1 family. Expressed in both central and peripheral nervous systems.

The protein localises to the cell membrane. Functionally, receptor for dopamine. The activity of this receptor is mediated by G proteins which activate adenylyl cyclase. Also capable of generating a calcium signal. In terms of antagonist responses, would be classed with the D1-like dopamine receptor group. This receptor is an attractive candidate for initiating biochemical cascades underlying olfactory learning. The protein is Dopamine receptor 2 (Dop1R2) of Drosophila melanogaster (Fruit fly).